The following is a 439-amino-acid chain: Uracil-regulated protein 1 (439 aa).

The disordered stretch occupies residues 1–24; sequence MLATEQSRPAECNGAHAHEKTEEV. GTP is bound at residue 268 to 272; the sequence is RVHDE. Residues Cys-273, Cys-284, and Cys-286 each contribute to the Zn(2+) site. 315–317 provides a ligand contact to GTP; sequence EGR. Residue Asp-353 is the Proton acceptor of the active site. Arg-355 serves as the catalytic Nucleophile. Residues Ser-377 and Lys-382 each coordinate GTP.

The protein belongs to the GTP cyclohydrolase II family.

It localises to the cytoplasm. The protein localises to the nucleus. The polypeptide is Uracil-regulated protein 1 (urg1) (Schizosaccharomyces pombe (strain 972 / ATCC 24843) (Fission yeast)).